We begin with the raw amino-acid sequence, 262 residues long: Shikimate dehydrogenase (NADP(+)) (262 aa).

Shikimate is bound by residues 15–17 (SRS) and Thr-62. The Proton acceptor role is filled by Lys-66. Glu-78 contributes to the NADP(+) binding site. 2 residues coordinate shikimate: Asn-87 and Asp-102. NADP(+)-binding positions include 126–130 (GAGGA), 150–155 (NRTLAR), and Met-214. Tyr-216 lines the shikimate pocket. NADP(+) is bound at residue Gly-236.

Belongs to the shikimate dehydrogenase family. As to quaternary structure, homodimer.

It carries out the reaction shikimate + NADP(+) = 3-dehydroshikimate + NADPH + H(+). The protein operates within metabolic intermediate biosynthesis; chorismate biosynthesis; chorismate from D-erythrose 4-phosphate and phosphoenolpyruvate: step 4/7. Its function is as follows. Involved in the biosynthesis of the chorismate, which leads to the biosynthesis of aromatic amino acids. Catalyzes the reversible NADPH linked reduction of 3-dehydroshikimate (DHSA) to yield shikimate (SA). The sequence is that of Shikimate dehydrogenase (NADP(+)) from Acinetobacter baumannii (strain ACICU).